A 2303-amino-acid chain; its full sequence is Genome polyprotein (2303 aa).

A zinc finger lies at 3 to 14 (CKHGYPDVCPIC). The tract at residues 30–46 (DGEWFPTDLLCVDLDDD) is acidic. The segment at 60-73 (MEWTDVPLVCDTVM) is theilo. A disordered region spans residues 73–93 (MEPQGNASSSDKSNSQSSGNE). Gly77 carries N-myristoyl glycine; by host lipidation. The span at 80–90 (SSSDKSNSQSS) shows a compositional bias: low complexity. The cysteines at positions 501 and 503 are disulfide-linked. The host EIF4E binding stretch occupies residues 1041-1047 (YYKQRLI). Positions 1283 to 1448 (IPLASLCEKF…CKTPAGMLDI (166 aa)) constitute an SF3 helicase domain. 1312 to 1319 (GAAGQGKS) lines the ATP pocket. Residue Tyr1608 is modified to O-(5'-phospho-RNA)-tyrosine. The region spanning 1636–1829 (NPVMDFELFC…AATIITRELI (194 aa)) is the Peptidase C3 domain. Catalysis depends on for protease 3C activity residues His1680, Asp1714, and Cys1793. The RdRp catalytic domain occupies 2071-2189 (NYVYDVDYSN…GTNYQIDFNL (119 aa)). Catalysis depends on for RdRp activity residues Asp2077 and Asp2175.

It belongs to the picornaviruses polyprotein family. As to quaternary structure, interacts with host EIF4E. Interacts with the leader protein. In terms of assembly, interacts with host RAN; the complex L-RAN recruits cellular kinases responsible for the L-induced nucleocytoplasmic trafficking inhibition. The complex L-RAN can further bind to the host exportins XPO1/CRM1 and CSE1L/CAS. Interacts with the protein 2A. Interacts with host RNASEL; this interaction prevents RNASEL activation by its substrate 2'-5' oligoadenylates. In terms of processing, phosphorylated. Post-translationally, specific enzymatic cleavages by the viral protease in vivo yield a variety of precursors and mature proteins. The polyprotein seems to be cotranslationally cleaved at the 2A/2B junction by a ribosomal skip from one codon to the next without formation of a peptide bond. This process would release the P1-2A peptide from the translational complex. During virion maturation, immature virions are rendered infectious following cleavage of VP0 into VP4 and VP2. This maturation seems to be an autocatalytic event triggered by the presence of RNA in the capsid and is followed by a conformational change of the particle. In terms of processing, uridylylated by the polymerase and is covalently linked to the 5'-end of genomic RNA. This uridylylated form acts as a nucleotide-peptide primer for the polymerase. Post-translationally, myristoylation is required during RNA encapsidation and formation of the mature virus particle.

The protein localises to the virion. The protein resides in the host cytoplasm. Its subcellular location is the host nucleus. It localises to the host nucleolus. It is found in the host cytoplasmic vesicle membrane. The catalysed reaction is RNA(n) + a ribonucleoside 5'-triphosphate = RNA(n+1) + diphosphate. It catalyses the reaction ATP + H2O = ADP + phosphate + H(+). The enzyme catalyses Selective cleavage of Gln-|-Gly bond in the poliovirus polyprotein. In other picornavirus reactions Glu may be substituted for Gln, and Ser or Thr for Gly.. In terms of biological role, forms a complex with host RAN and probably binds to exportins carrying activated MAPK in order to mediate the hyperphosphorylation of host Phe/Gly containing nuclear pore proteins (Nups) resulting in cessation of active nucleocytoplasmic transport. Proteins with NLS signals fail to import, cellular mRNAs fail to export, and some proteins small enough for diffusion are not retained anymore (efflux). The resulting inhibition of cellular protein synthesis serves to ensure maximal viral gene expression and to evade host immune response. The leader protein also inhibits host interferon regulatory factor 3 (IRF3) dimerization, thereby blocking the transcriptional activation of IFN genes. Binds to host RNase L thereby preventing its activation by 2'-5' oligoadenylates in order to counteract the antiviral interferon-inducible OAS/RNase L pathway. Inhibits the integrated stress response (ISR) in the infected cell. Inhibits the host EIF2AK2/PKR by rendering this kinase unable to detect double-stranded RNA. Also impairs host stress granule formation probably by acting on a step downstream of EIF2AK2/PKR activation. Functionally, forms an icosahedral capsid of pseudo T=3 symmetry with capsid proteins VP2 and VP3. Together they form an icosahedral capsid composed of 60 copies of each VP1, VP2, and VP3, with a diameter of approximately 300 Angstroms. VP4 lies on the inner surface of the protein shell formed by VP1, VP2 and VP3. All the three latter proteins contain a beta-sheet structure called beta-barrel jelly roll. VP1 is situated at the 12 fivefold axes, whereas VP2 and VP3 are located at the quasi-sixfold axes. Lies on the inner surface of the capsid shell. After binding to the host receptor, the capsid undergoes conformational changes. Capsid protein VP4 is released, capsid protein VP1 N-terminus is externalized, and together, they shape a pore in the host membrane through which the viral genome is translocated into the host cell cytoplasm. After genome has been released, the channel shrinks. Its function is as follows. VP0 precursor is a component of immature procapsids. In terms of biological role, involved in host translation shutoff by inhibiting cap-dependent mRNA translation. Nuclear localization is required for this function. The resulting inhibition of cellular protein synthesis serves to ensure maximal viral gene expression and to evade host immune response. Inhibits the phosphorylation of the leader protein. Binds to the RNA stem-loop essential for the ribosomal frameshift event and trans-activates the production of protein 2B*. Functionally, affects membrane integrity and causes an increase in membrane permeability. Associates with and induces structural rearrangements of intracellular membranes. It displays RNA-binding, nucleotide binding and NTPase activities. Its function is as follows. Serves as membrane anchor via its hydrophobic domain. In terms of biological role, forms a primer, VPg-pU, which is utilized by the polymerase for the initiation of RNA chains. Functionally, cysteine protease that generates mature viral proteins from the precursor polyprotein. In addition to its proteolytic activity, it binds to viral RNA, and thus influences viral genome replication. RNA and substrate cooperatively bind to the protease. Cleaves host PABP1, this cleavage is important for viral replication. Replicates the genomic and antigenomic RNAs by recognizing replications specific signals. Performs VPg uridylylation. The protein is Genome polyprotein of Mus musculus (Mouse).